The following is a 409-amino-acid chain: Na(+)-translocating NADH-quinone reductase subunit F (409 aa).

Residues 5-25 form a helical membrane-spanning segment; it reads FIFGIIAFTALVLVLAVIILF. The region spanning 34–128 is the 2Fe-2S ferredoxin-type domain; it reads GDITISINND…SMDVELPEEI (95 aa). [2Fe-2S] cluster-binding residues include Cys71, Cys77, Cys80, and Cys112. In terms of domain architecture, FAD-binding FR-type spans 131-271; the sequence is VKKWECTVIS…SGPFGEFFAK (141 aa).

The protein belongs to the NqrF family. In terms of assembly, composed of six subunits; NqrA, NqrB, NqrC, NqrD, NqrE and NqrF. [2Fe-2S] cluster is required as a cofactor. Requires FAD as cofactor.

The protein resides in the cell inner membrane. It carries out the reaction a ubiquinone + n Na(+)(in) + NADH + H(+) = a ubiquinol + n Na(+)(out) + NAD(+). In terms of biological role, NQR complex catalyzes the reduction of ubiquinone-1 to ubiquinol by two successive reactions, coupled with the transport of Na(+) ions from the cytoplasm to the periplasm. The first step is catalyzed by NqrF, which accepts electrons from NADH and reduces ubiquinone-1 to ubisemiquinone by a one-electron transfer pathway. The polypeptide is Na(+)-translocating NADH-quinone reductase subunit F (Actinobacillus pleuropneumoniae serotype 5b (strain L20)).